We begin with the raw amino-acid sequence, 150 residues long: Large ribosomal subunit protein bL9 (150 aa).

The protein belongs to the bacterial ribosomal protein bL9 family.

Binds to the 23S rRNA. The sequence is that of Large ribosomal subunit protein bL9 from Alkalilimnicola ehrlichii (strain ATCC BAA-1101 / DSM 17681 / MLHE-1).